A 276-amino-acid polypeptide reads, in one-letter code: MGQKVHPYSLRIKINRDWKSKWYFDKKLYSEILHEDFLIRRETMKFFKGIRFDISDIEIIRNNLQRVTVVVSTPRPGSVIGVKGANLEKIGQLLTRKISKKINIKIKEIKKPEFDAQIVANGIAKQLENRASYRKLLKSSLLSSISKGVQGVKIKVSGRLGGAEIARSFEVKEGRVPLHTLRANIDYGFAEAQTTYGVIGVKVWLFKGEVLGKQTNSDAGQVINRKSSREKSEHFDRSRVDDRGRKVLNDDKFSKEKLELGSKSNNDFKKKNGSDV.

The 72-residue stretch at 39-110 (IRRETMKFFK…KINIKIKEIK (72 aa)) folds into the KH type-2 domain. The disordered stretch occupies residues 218–243 (DAGQVINRKSSREKSEHFDRSRVDDR). The span at 227–243 (SSREKSEHFDRSRVDDR) shows a compositional bias: basic and acidic residues.

Belongs to the universal ribosomal protein uS3 family. Part of the 30S ribosomal subunit. Forms a tight complex with proteins S10 and S14.

Binds the lower part of the 30S subunit head. Binds mRNA in the 70S ribosome, positioning it for translation. This is Small ribosomal subunit protein uS3 from Borrelia hermsii (strain HS1 / DAH).